A 619-amino-acid polypeptide reads, in one-letter code: CREB-regulated transcription coactivator 3 (619 aa).

Residues Met-1–Phe-103 are required for interaction with HTLV-1 TAX. A phosphoserine mark is found at Ser-4 and Ser-62. The disordered stretch occupies residues Phe-103–Gly-150. Position 160 is a phosphothreonine (Thr-160). Ser-162 is modified (phosphoserine; by SIK2). Residues Ala-165 to Pro-175 are compositionally biased toward polar residues. Residues Ala-165–Ser-185 are disordered. Lys-232 is covalently cross-linked (Glycyl lysine isopeptide (Lys-Gly) (interchain with G-Cter in SUMO2)). Phosphoserine is present on residues Ser-273, Ser-329, Ser-332, Ser-370, Ser-391, Ser-396, Ser-410, and Ser-443. The tract at residues Ser-375–Leu-431 is disordered. The tract at residues Ser-380 to Ala-401 is required for interaction with PPP2CA and PPP2R1A. Residues Phe-405–Leu-431 are compositionally biased toward polar residues.

It belongs to the TORC family. Binding, as a tetramer, through its N-terminal region, with the bZIP domain of CREB1 enhances recruitment of TAF4 to the promoter. 'Arg-314' in the bZIP domain of CREB1 is essential for this interaction. Interacts (when phosphorylated at Ser-162 and Se-273) with 14-3-3 proteins. Interacts with YWHAE. Interacts (when phosphorylated at Ser-391) with phosphatase PP2A catalytic subunit PPP2CA and regulatory subunits PPP2R1A and PPP2R2A. Interacts, via the N-terminal with the ankyrin repeats of BCL3, to form a complex with CREB1 on CRE and TxRE responsive elements and represses HTLV-1 LTR-mediated transcription. As to quaternary structure, (Microbial infection) Interacts with HTLV-1 protein Tax; this interaction enhances tax transcriptional activity. In terms of processing, phosphorylation/dephosphorylation states of Ser-273 are required for regulating transduction of CREB activity. CRTCs/TORCs are inactive when phosphorylated, and active when dephosphorylated at this site. May be phosphorylated at Ser-391 by MAPK3/ERK1 and/or MAPK1/ERK2 or by some cyclin-dependent kinases such as CDK1,CDK2 or CDK5. Following adenylyl cyclase activation, dephosphorylated at Ser-162 and Ser-273 resulting in its dissociation from 14-3-3 proteins probably promoting CRTC3 translocation into the nucleus. In terms of tissue distribution, predominantly expressed in B and T lymphocytes. Highest levels in lung. Also expressed in brain, colon, heart, kidney, ovary, and prostate. Weak expression in liver, pancreas, muscle, small intestine, spleen and stomach.

It localises to the nucleus. It is found in the cytoplasm. Transcriptional coactivator for CREB1 which activates transcription through both consensus and variant cAMP response element (CRE) sites. Acts as a coactivator, in the SIK/TORC signaling pathway, being active when dephosphorylated and acts independently of CREB1 'Ser-133' phosphorylation. Enhances the interaction of CREB1 with TAF4. Regulates the expression of specific CREB-activated genes such as the steroidogenic gene, StAR. Potent coactivator of PPARGC1A and inducer of mitochondrial biogenesis in muscle cells. Also coactivator for TAX activation of the human T-cell leukemia virus type 1 (HTLV-1) long terminal repeats (LTR). This chain is CREB-regulated transcription coactivator 3 (CRTC3), found in Homo sapiens (Human).